The chain runs to 390 residues: Queuine tRNA-ribosyltransferase (390 aa).

Asp-92 (proton acceptor) is an active-site residue. Substrate is bound by residues 92–96 (DSGGF), Asp-146, Gln-195, and Gly-222. Residues 253 to 259 (GVGTPED) are RNA binding. The active-site Nucleophile is Asp-272. The interval 277–281 (TRNAR) is RNA binding; important for wobble base 34 recognition. The Zn(2+) site is built by Cys-310, Cys-312, Cys-315, and His-354.

Belongs to the queuine tRNA-ribosyltransferase family. In terms of assembly, homodimer. Within each dimer, one monomer is responsible for RNA recognition and catalysis, while the other monomer binds to the replacement base PreQ1. The cofactor is Zn(2+).

The catalysed reaction is 7-aminomethyl-7-carbaguanine + guanosine(34) in tRNA = 7-aminomethyl-7-carbaguanosine(34) in tRNA + guanine. The protein operates within tRNA modification; tRNA-queuosine biosynthesis. Its function is as follows. Catalyzes the base-exchange of a guanine (G) residue with the queuine precursor 7-aminomethyl-7-deazaguanine (PreQ1) at position 34 (anticodon wobble position) in tRNAs with GU(N) anticodons (tRNA-Asp, -Asn, -His and -Tyr). Catalysis occurs through a double-displacement mechanism. The nucleophile active site attacks the C1' of nucleotide 34 to detach the guanine base from the RNA, forming a covalent enzyme-RNA intermediate. The proton acceptor active site deprotonates the incoming PreQ1, allowing a nucleophilic attack on the C1' of the ribose to form the product. After dissociation, two additional enzymatic reactions on the tRNA convert PreQ1 to queuine (Q), resulting in the hypermodified nucleoside queuosine (7-(((4,5-cis-dihydroxy-2-cyclopenten-1-yl)amino)methyl)-7-deazaguanosine). The sequence is that of Queuine tRNA-ribosyltransferase from Paracidovorax citrulli (strain AAC00-1) (Acidovorax citrulli).